The primary structure comprises 442 residues: UDP-N-acetylmuramoylalanine--D-glutamate ligase (442 aa).

An ATP-binding site is contributed by 113 to 119 (GSNGKTT).

The protein belongs to the MurCDEF family.

It localises to the cytoplasm. It carries out the reaction UDP-N-acetyl-alpha-D-muramoyl-L-alanine + D-glutamate + ATP = UDP-N-acetyl-alpha-D-muramoyl-L-alanyl-D-glutamate + ADP + phosphate + H(+). Its pathway is cell wall biogenesis; peptidoglycan biosynthesis. In terms of biological role, cell wall formation. Catalyzes the addition of glutamate to the nucleotide precursor UDP-N-acetylmuramoyl-L-alanine (UMA). The sequence is that of UDP-N-acetylmuramoylalanine--D-glutamate ligase from Coxiella burnetii (strain CbuK_Q154) (Coxiella burnetii (strain Q154)).